The primary structure comprises 235 residues: Phosphoribosylaminoimidazole-succinocarboxamide synthase (235 aa).

The protein belongs to the SAICAR synthetase family.

The catalysed reaction is 5-amino-1-(5-phospho-D-ribosyl)imidazole-4-carboxylate + L-aspartate + ATP = (2S)-2-[5-amino-1-(5-phospho-beta-D-ribosyl)imidazole-4-carboxamido]succinate + ADP + phosphate + 2 H(+). The protein operates within purine metabolism; IMP biosynthesis via de novo pathway; 5-amino-1-(5-phospho-D-ribosyl)imidazole-4-carboxamide from 5-amino-1-(5-phospho-D-ribosyl)imidazole-4-carboxylate: step 1/2. In Clostridium botulinum (strain Eklund 17B / Type B), this protein is Phosphoribosylaminoimidazole-succinocarboxamide synthase.